Consider the following 675-residue polypeptide: Methionine--tRNA ligase (675 aa).

A 'HIGH' region motif is present at residues 15–25 (PYANGSIHLGH). 4 residues coordinate Zn(2+): C146, C149, C159, and C162. The 'KMSKS' region motif lies at 332-336 (KMSKS). K335 is a binding site for ATP. The tRNA-binding domain occupies 573–675 (DFAKVDMRIA…SGAQPGMQVK (103 aa)).

This sequence belongs to the class-I aminoacyl-tRNA synthetase family. MetG type 1 subfamily. As to quaternary structure, homodimer. It depends on Zn(2+) as a cofactor.

Its subcellular location is the cytoplasm. It carries out the reaction tRNA(Met) + L-methionine + ATP = L-methionyl-tRNA(Met) + AMP + diphosphate. Is required not only for elongation of protein synthesis but also for the initiation of all mRNA translation through initiator tRNA(fMet) aminoacylation. The sequence is that of Methionine--tRNA ligase from Yersinia pseudotuberculosis serotype O:3 (strain YPIII).